Reading from the N-terminus, the 198-residue chain is GTP cyclohydrolase-2 (198 aa).

A GTP-binding site is contributed by 49-53; sequence RVHSE. Residues Cys54, Cys65, and Cys67 each contribute to the Zn(2+) site. GTP is bound by residues Gln70, 92 to 94, and Thr114; that span reads EGR. Asp126 functions as the Proton acceptor in the catalytic mechanism. Catalysis depends on Arg128, which acts as the Nucleophile. Thr149 and Lys154 together coordinate GTP.

Belongs to the GTP cyclohydrolase II family. In terms of assembly, homodimer. Zn(2+) serves as cofactor.

It carries out the reaction GTP + 4 H2O = 2,5-diamino-6-hydroxy-4-(5-phosphoribosylamino)-pyrimidine + formate + 2 phosphate + 3 H(+). It functions in the pathway cofactor biosynthesis; riboflavin biosynthesis; 5-amino-6-(D-ribitylamino)uracil from GTP: step 1/4. In terms of biological role, catalyzes the conversion of GTP to 2,5-diamino-6-ribosylamino-4(3H)-pyrimidinone 5'-phosphate (DARP), formate and pyrophosphate. In Escherichia fergusonii (strain ATCC 35469 / DSM 13698 / CCUG 18766 / IAM 14443 / JCM 21226 / LMG 7866 / NBRC 102419 / NCTC 12128 / CDC 0568-73), this protein is GTP cyclohydrolase-2.